The following is a 197-amino-acid chain: Suppressor of RNA silencing p3 (197 aa).

This sequence belongs to the tenuiviruses p3 protein family. In terms of assembly, homodimer.

It is found in the host cytoplasm. Functionally, acts as a suppressor of RNA-mediated gene silencing, also known as post-transcriptional gene silencing (PTGS), presumably through the binding of dsRNA. In Rottboellia (Sorghum), this protein is Suppressor of RNA silencing p3.